The chain runs to 34 residues: Mu-theraphotoxin-Df1a (34 aa).

Intrachain disulfides connect cysteine 2–cysteine 16, cysteine 9–cysteine 21, and cysteine 15–cysteine 28. Position 34 is a phenylalanine amide (phenylalanine 34).

This sequence belongs to the neurotoxin 10 (Hwtx-1) family. 54 (ProTx-1) subfamily. Post-translationally, C-terminal amidation is important for the high potency of the toxin. Expressed by the venom gland.

The protein localises to the secreted. Its function is as follows. Inhibits sodium channel Nav1.7/SCN9A with high potency (IC(50)=117 nM) and Nav1.2/SCN2A, Nav1.3/SCN3A, Nav1.6/SCN8A and Nav1.5/SCN5 with weaker potency. Also inhibits voltage-gated calcium channel Cav3.1/CACNA1G, Cav3.2/CACNA1H and Cav3.3/CACNA1I. This chain is Mu-theraphotoxin-Df1a, found in Davus fasciatus (Costa Rican tiger rump).